The chain runs to 344 residues: Holliday junction branch migration complex subunit RuvB (344 aa).

Residues 1 to 25 show a composition bias toward basic and acidic residues; sequence MTDSDPTLRPDRLPEDVQATDDRAL. The segment at 1–33 is disordered; that stretch reads MTDSDPTLRPDRLPEDVQATDDRALRPQSLDDF. Residues 1-186 are large ATPase domain (RuvB-L); that stretch reads MTDSDPTLRP…FGIPTRLNFY (186 aa). ATP contacts are provided by residues Leu25, Arg26, Gly67, Lys70, Thr71, Thr72, 133–135, Arg176, Tyr186, and Arg223; that span reads EDF. Position 71 (Thr71) interacts with Mg(2+). The interval 187 to 257 is small ATPAse domain (RuvB-S); that stretch reads TIAELDQIVA…IADSALTRLG (71 aa). Residues 260-344 are head domain (RuvB-H); the sequence is DLGLDGADRR…PKRPDQGELI (85 aa). The DNA site is built by Arg296, Arg315, and Arg320.

The protein belongs to the RuvB family. As to quaternary structure, homohexamer. Forms an RuvA(8)-RuvB(12)-Holliday junction (HJ) complex. HJ DNA is sandwiched between 2 RuvA tetramers; dsDNA enters through RuvA and exits via RuvB. An RuvB hexamer assembles on each DNA strand where it exits the tetramer. Each RuvB hexamer is contacted by two RuvA subunits (via domain III) on 2 adjacent RuvB subunits; this complex drives branch migration. In the full resolvosome a probable DNA-RuvA(4)-RuvB(12)-RuvC(2) complex forms which resolves the HJ.

The protein localises to the cytoplasm. The enzyme catalyses ATP + H2O = ADP + phosphate + H(+). Its function is as follows. The RuvA-RuvB-RuvC complex processes Holliday junction (HJ) DNA during genetic recombination and DNA repair, while the RuvA-RuvB complex plays an important role in the rescue of blocked DNA replication forks via replication fork reversal (RFR). RuvA specifically binds to HJ cruciform DNA, conferring on it an open structure. The RuvB hexamer acts as an ATP-dependent pump, pulling dsDNA into and through the RuvAB complex. RuvB forms 2 homohexamers on either side of HJ DNA bound by 1 or 2 RuvA tetramers; 4 subunits per hexamer contact DNA at a time. Coordinated motions by a converter formed by DNA-disengaged RuvB subunits stimulates ATP hydrolysis and nucleotide exchange. Immobilization of the converter enables RuvB to convert the ATP-contained energy into a lever motion, pulling 2 nucleotides of DNA out of the RuvA tetramer per ATP hydrolyzed, thus driving DNA branch migration. The RuvB motors rotate together with the DNA substrate, which together with the progressing nucleotide cycle form the mechanistic basis for DNA recombination by continuous HJ branch migration. Branch migration allows RuvC to scan DNA until it finds its consensus sequence, where it cleaves and resolves cruciform DNA. The chain is Holliday junction branch migration complex subunit RuvB from Jannaschia sp. (strain CCS1).